Here is a 366-residue protein sequence, read N- to C-terminus: tRNA/tmRNA (uracil-C(5))-methyltransferase (366 aa).

Residues Gln-190, Tyr-218, Asn-223, Glu-239, and Asp-299 each coordinate S-adenosyl-L-methionine. The active-site Nucleophile is the Cys-324. The active-site Proton acceptor is the Glu-358.

It belongs to the class I-like SAM-binding methyltransferase superfamily. RNA M5U methyltransferase family. TrmA subfamily.

It carries out the reaction uridine(54) in tRNA + S-adenosyl-L-methionine = 5-methyluridine(54) in tRNA + S-adenosyl-L-homocysteine + H(+). The catalysed reaction is uridine(341) in tmRNA + S-adenosyl-L-methionine = 5-methyluridine(341) in tmRNA + S-adenosyl-L-homocysteine + H(+). Its function is as follows. Dual-specificity methyltransferase that catalyzes the formation of 5-methyluridine at position 54 (m5U54) in all tRNAs, and that of position 341 (m5U341) in tmRNA (transfer-mRNA). The chain is tRNA/tmRNA (uracil-C(5))-methyltransferase from Escherichia coli O157:H7.